Consider the following 541-residue polypeptide: Arginine--tRNA ligase (541 aa).

The short motif at 119–129 is the 'HIGH' region element; it reads ANPTGPLHIGH.

It belongs to the class-I aminoacyl-tRNA synthetase family. Monomer.

Its subcellular location is the cytoplasm. The enzyme catalyses tRNA(Arg) + L-arginine + ATP = L-arginyl-tRNA(Arg) + AMP + diphosphate. This Helicobacter pylori (strain P12) protein is Arginine--tRNA ligase.